The sequence spans 221 residues: Imidazoleglycerol-phosphate dehydratase (221 aa).

Belongs to the imidazoleglycerol-phosphate dehydratase family.

It carries out the reaction D-erythro-1-(imidazol-4-yl)glycerol 3-phosphate = 3-(imidazol-4-yl)-2-oxopropyl phosphate + H2O. It functions in the pathway amino-acid biosynthesis; L-histidine biosynthesis; L-histidine from 5-phospho-alpha-D-ribose 1-diphosphate: step 6/9. In Kluyveromyces lactis (strain ATCC 8585 / CBS 2359 / DSM 70799 / NBRC 1267 / NRRL Y-1140 / WM37) (Yeast), this protein is Imidazoleglycerol-phosphate dehydratase (HIS3).